The chain runs to 227 residues: Protein rapunzel (227 aa).

Residues 179–196 (LAYLFCIGFIALMGYYGI) traverse the membrane as a helical segment.

Its subcellular location is the membrane. This is Protein rapunzel from Danio rerio (Zebrafish).